A 231-amino-acid chain; its full sequence is RNA pyrophosphohydrolase (231 aa).

The Nudix hydrolase domain occupies 6–149; it reads GFRPNVGIIL…KRDVYQLALT (144 aa). Residues 38–59 carry the Nudix box motif; sequence GGIKYGETPEQAMYRELHEEIG. Residues 168–200 are disordered; that stretch reads VHHGRHGSGQRYAQQPGQPPTLAQRRPLQPVTQ.

It belongs to the Nudix hydrolase family. RppH subfamily. A divalent metal cation is required as a cofactor.

Its function is as follows. Accelerates the degradation of transcripts by removing pyrophosphate from the 5'-end of triphosphorylated RNA, leading to a more labile monophosphorylated state that can stimulate subsequent ribonuclease cleavage. This chain is RNA pyrophosphohydrolase, found in Cupriavidus pinatubonensis (strain JMP 134 / LMG 1197) (Cupriavidus necator (strain JMP 134)).